The chain runs to 180 residues: Transcription factor IBH1-like 1 (180 aa).

The bHLH domain occupies 110-160; sequence KSKSASEEAAAKAKRLVKRRTQGLRNVVPGGELMSNDVLLLQETLDYIVSL.

The protein belongs to the bHLH protein family.

Its subcellular location is the nucleus. In terms of biological role, functions redundandly with IBH1/BHLH158 in a regulation node known as the incoherent feed-forward loop (FFL). Acts as transcriptional repressor that negatively regulates cell and organ elongation in response to gibberellin (GA) and brassinosteroid (BR) signaling. The protein is Transcription factor IBH1-like 1 of Arabidopsis thaliana (Mouse-ear cress).